The chain runs to 362 residues: Cytochrome c peroxidase, mitochondrial (362 aa).

The transit peptide at 1-40 (MASASRQILRAASRASTRTAFAPAASRGLAARTIAGRRFY) directs the protein to the mitochondrion. The active-site Proton acceptor is His121. Heme b is bound at residue His244. The Tryptophan radical intermediate role is filled by Trp260.

It belongs to the peroxidase family. Cytochrome c peroxidase subfamily. As to quaternary structure, forms a one-to-one complex with cytochrome c. Requires heme b as cofactor.

It localises to the mitochondrion matrix. Its subcellular location is the mitochondrion intermembrane space. The enzyme catalyses 2 Fe(II)-[cytochrome c] + H2O2 + 2 H(+) = 2 Fe(III)-[cytochrome c] + 2 H2O. Functionally, destroys radicals which are normally produced within the cells and which are toxic to biological systems. In Pyricularia oryzae (strain 70-15 / ATCC MYA-4617 / FGSC 8958) (Rice blast fungus), this protein is Cytochrome c peroxidase, mitochondrial (CCP1).